A 678-amino-acid chain; its full sequence is NADPH--cytochrome P450 reductase (678 aa).

The residue at position 2 (glycine 2) is an N-acetylglycine. Over 2–22 (GDSHEDTSATMPEAVAEEVSL) the chain is Lumenal. The helical transmembrane segment at 23–43 (FSTTDMVLFSLIVGVLTYWFI) threads the bilayer. The Cytoplasmic portion of the chain corresponds to 44-678 (FRKKKEEIPE…KGRYSLDVWS (635 aa)). The Flavodoxin-like domain occupies 80-224 (IIVFYGSQTG…DFITWREQFW (145 aa)). Residues 86 to 91 (SQTGTA), 138 to 141 (ATYG), 173 to 182 (LGNKTYEHFN), and aspartate 208 contribute to the FMN site. Residues 279–521 (KNPFLAAVTA…FVRKSQFRLP (243 aa)) form the FAD-binding FR-type domain. Position 298 (arginine 298) interacts with NADP(+). FAD contacts are provided by residues arginine 424, 454 to 457 (RYYS), 472 to 474 (CAV), tyrosine 478, and 488 to 491 (GVAT). Residues threonine 535, 596-597 (SR), 602-606 (KVYVQ), and aspartate 639 contribute to the NADP(+) site. Residue tryptophan 677 coordinates FAD.

It belongs to the NADPH--cytochrome P450 reductase family. This sequence in the N-terminal section; belongs to the flavodoxin family. The protein in the C-terminal section; belongs to the flavoprotein pyridine nucleotide cytochrome reductase family. FAD is required as a cofactor. FMN serves as cofactor.

It localises to the endoplasmic reticulum membrane. It carries out the reaction 2 oxidized [cytochrome P450] + NADPH = 2 reduced [cytochrome P450] + NADP(+) + H(+). Its function is as follows. This enzyme is required for electron transfer from NADP to cytochrome P450 in microsomes. It can also provide electron transfer to heme oxygenase and cytochrome B5. This is NADPH--cytochrome P450 reductase from Rattus norvegicus (Rat).